The primary structure comprises 698 residues: MOXD1 homolog 1 (698 aa).

An N-terminal signal peptide occupies residues 1-20 (MSVQDVLWIVLTVQLSFGLA). N-linked (GlcNAc...) asparagine glycosylation is found at asparagine 36, asparagine 140, and asparagine 221. A DOMON domain is found at 54-174 (GLYWLKWWIN…DTFKVLWSIG (121 aa)). The active site involves tyrosine 232. Residues histidine 265 and histidine 266 each coordinate Cu cation. Cysteine 272 and cysteine 309 form a disulfide bridge. Cu cation contacts are provided by histidine 347, histidine 425, and histidine 427. Intrachain disulfides connect cysteine 403/cysteine 516 and cysteine 479/cysteine 501. Residue histidine 425 is part of the active site. An N-linked (GlcNAc...) asparagine glycan is attached at asparagine 465. Methionine 500 lines the Cu cation pocket. Residues asparagine 538 and asparagine 561 are each glycosylated (N-linked (GlcNAc...) asparagine).

The protein belongs to the copper type II ascorbate-dependent monooxygenase family. The cofactor is Cu(2+).

The protein resides in the secreted. This is MOXD1 homolog 1 from Drosophila melanogaster (Fruit fly).